Consider the following 294-residue polypeptide: Bifunctional protein FolD (294 aa).

NADP(+)-binding positions include 166–168 (GRS), Ser191, and Ile232.

Belongs to the tetrahydrofolate dehydrogenase/cyclohydrolase family. Homodimer.

It carries out the reaction (6R)-5,10-methylene-5,6,7,8-tetrahydrofolate + NADP(+) = (6R)-5,10-methenyltetrahydrofolate + NADPH. It catalyses the reaction (6R)-5,10-methenyltetrahydrofolate + H2O = (6R)-10-formyltetrahydrofolate + H(+). It functions in the pathway one-carbon metabolism; tetrahydrofolate interconversion. In terms of biological role, catalyzes the oxidation of 5,10-methylenetetrahydrofolate to 5,10-methenyltetrahydrofolate and then the hydrolysis of 5,10-methenyltetrahydrofolate to 10-formyltetrahydrofolate. The polypeptide is Bifunctional protein FolD (Nitrobacter hamburgensis (strain DSM 10229 / NCIMB 13809 / X14)).